Consider the following 873-residue polypeptide: MDARYNPPAIESKWQAHWRELGLDRTPELTAESRKFYALSMFPYPSGSLHMGHVRNYTITDVIARHKRMQGYAVLHPMGWDAFGLPAENAAIDRGIPPAKWTYQNIAQMRDQLQRLGLSYDWEREITTCAPDYYKWTQWLFLQFFKAGLAYQKEAPVNWDPVDQTVLANEQVDAEGRSWRSGALVEKRLLKQWFLKITAYADQLLADLEKLSGWPERVLTMQENWIGQSVGARVVFKTETGEELPVFTTRPDTLWGATFMVLAPEHPLVEKLTTPEQEVAVKAYRAEAAARSEIERSAEDREKTGVWTGSYAINPVNQERIPIWIADYVLMGYGTGAIMAVPAHDQRDFEFARQFGLPIKLVVQPPQGGVTSAEDLQAAWTGEGVLINSGPLNGIPVGKGPGQSVERAIAWLEEQGLGERQVNYRLRDWLISRQRYWGCPIPIIHCPHCGIVPVPEEDLPVLLPEDVELTGRGGSPLAQLEDWVKVKCPACGADARRETDTMDTFICSSWYFLRFSDPRNDREIFRKDLVNAWLPVDQYVGGIEHAILHLLYSRFFTKVLRDLGLLNFDEPFSRLLTQGMVQARTYYNPNKSGKDRWIPTALVKDPNDPRDPETGEPLQVIYATMSKSKGNGVDPEEVLANYGADTARMFILFKAPPEKDLEWDDADVEGQFRFLNRVWRQVYEFVVRGSGTESLQGKAAELLQAKVEAGSLTKAERDLRRAVHTAIKEVSEDLEEYQFNTAIAGLMKLSNALAEAEIPDSPVYAEGIRTLVLLLAPFAPHMAEELWQALGGTDSVHRQAWPTYDPAALVADTVTIVVQVNGKLRGSFEAPADVTPQEQERLALQSEAAQRYLQGMTPKRVIVVPKKLVNLVV.

The 'HIGH' region motif lies at 43–53; it reads PYPSGSLHMGH. The 'KMSKS' region signature appears at 624 to 628; sequence TMSKS. Lysine 627 contacts ATP.

The protein belongs to the class-I aminoacyl-tRNA synthetase family.

It is found in the cytoplasm. It carries out the reaction tRNA(Leu) + L-leucine + ATP = L-leucyl-tRNA(Leu) + AMP + diphosphate. The chain is Leucine--tRNA ligase from Synechococcus sp. (strain JA-3-3Ab) (Cyanobacteria bacterium Yellowstone A-Prime).